Here is a 941-residue protein sequence, read N- to C-terminus: Bifunctional uridylyltransferase/uridylyl-removing enzyme (941 aa).

Residues 1–372 are uridylyltransferase; the sequence is MAKHDLSDAT…RFAHRPRRIP (372 aa). The uridylyl-removing stretch occupies residues 373–728; sequence GTPEFIEDRG…VRTHSFHAIT (356 aa). An HD domain is found at 489–611; sequence VDEHLIRSVG…VQSLDRLRML (123 aa). ACT domains lie at 729-810 and 840-919; these read EITV…EVIA and VIEI…LREQ. The disordered stretch occupies residues 916–941; the sequence is LREQMPSGIIAPAATKSPAAEKKARV.

The protein belongs to the GlnD family. Mg(2+) is required as a cofactor.

The enzyme catalyses [protein-PII]-L-tyrosine + UTP = [protein-PII]-uridylyl-L-tyrosine + diphosphate. It catalyses the reaction [protein-PII]-uridylyl-L-tyrosine + H2O = [protein-PII]-L-tyrosine + UMP + H(+). Its activity is regulated as follows. Uridylyltransferase (UTase) activity is inhibited by glutamine, while glutamine activates uridylyl-removing (UR) activity. Its function is as follows. Modifies, by uridylylation and deuridylylation, the PII regulatory proteins (GlnB and homologs), in response to the nitrogen status of the cell that GlnD senses through the glutamine level. Under low glutamine levels, catalyzes the conversion of the PII proteins and UTP to PII-UMP and PPi, while under higher glutamine levels, GlnD hydrolyzes PII-UMP to PII and UMP (deuridylylation). Thus, controls uridylylation state and activity of the PII proteins, and plays an important role in the regulation of nitrogen assimilation and metabolism. This is Bifunctional uridylyltransferase/uridylyl-removing enzyme from Allorhizobium ampelinum (strain ATCC BAA-846 / DSM 112012 / S4) (Agrobacterium vitis (strain S4)).